The chain runs to 212 residues: Large ribosomal subunit protein uL3 (212 aa).

Gln153 is subject to N5-methylglutamine.

This sequence belongs to the universal ribosomal protein uL3 family. As to quaternary structure, part of the 50S ribosomal subunit. Forms a cluster with proteins L14 and L19. Methylated by PrmB.

In terms of biological role, one of the primary rRNA binding proteins, it binds directly near the 3'-end of the 23S rRNA, where it nucleates assembly of the 50S subunit. The protein is Large ribosomal subunit protein uL3 of Shewanella pealeana (strain ATCC 700345 / ANG-SQ1).